We begin with the raw amino-acid sequence, 312 residues long: Ribonuclease Z (312 aa).

The Zn(2+) site is built by His-62, His-64, Asp-66, His-67, His-144, Asp-215, and His-273. Residue Asp-66 is the Proton acceptor of the active site.

Belongs to the RNase Z family. Homodimer. Requires Zn(2+) as cofactor.

It catalyses the reaction Endonucleolytic cleavage of RNA, removing extra 3' nucleotides from tRNA precursor, generating 3' termini of tRNAs. A 3'-hydroxy group is left at the tRNA terminus and a 5'-phosphoryl group is left at the trailer molecule.. In terms of biological role, zinc phosphodiesterase, which displays some tRNA 3'-processing endonuclease activity. Probably involved in tRNA maturation, by removing a 3'-trailer from precursor tRNA. This chain is Ribonuclease Z, found in Prochlorococcus marinus (strain MIT 9515).